A 137-amino-acid chain; its full sequence is Small ribosomal subunit protein bS16 (137 aa).

Residues 104–118 are compositionally biased toward basic and acidic residues; the sequence is ADEKKKPVLKPKTEK. The interval 104–137 is disordered; sequence ADEKKKPVLKPKTEKAAPAPEAAAPEAESTEEQA. The span at 119–130 shows a compositional bias: low complexity; it reads AAPAPEAAAPEA.

This sequence belongs to the bacterial ribosomal protein bS16 family.

This is Small ribosomal subunit protein bS16 from Clavibacter michiganensis subsp. michiganensis (strain NCPPB 382).